Here is an 859-residue protein sequence, read N- to C-terminus: Magnesium transporter ALR1 (859 aa).

Residues methionine 1–leucine 20 are compositionally biased toward low complexity. 2 disordered regions span residues methionine 1–glutamine 281 and threonine 330–serine 399. Residue serine 2 is modified to N-acetylserine. Composition is skewed to basic and acidic residues over residues lysine 28–proline 42 and lysine 55–serine 73. Tyrosine 77 is subject to Phosphotyrosine. Serine 85 bears the Phosphoserine mark. Over residues proline 144–tyrosine 154 the composition is skewed to basic and acidic residues. The segment covering serine 157 to serine 176 has biased composition (low complexity). Phosphoserine occurs at positions 185 and 188. The span at isoleucine 193–serine 203 shows a compositional bias: basic and acidic residues. Positions tyrosine 213 to lysine 235 are enriched in polar residues. A phosphoserine mark is found at serine 220, serine 221, and serine 236. Threonine 242 bears the Phosphothreonine mark. Residues threonine 252–arginine 265 are compositionally biased toward polar residues. Residues threonine 330–serine 339 are compositionally biased toward low complexity. The segment covering glutamate 353–lysine 375 has biased composition (basic and acidic residues). 2 helical membrane-spanning segments follow: residues threonine 744–valine 764 and isoleucine 773–leucine 793. Residues phenylalanine 830 to aspartate 859 are disordered. Serine 850 is modified (phosphoserine).

This sequence belongs to the CorA metal ion transporter (MIT) (TC 1.A.35) family.

The protein localises to the cell membrane. Its function is as follows. Plasma membrane magnesium transporter. The chain is Magnesium transporter ALR1 (ALR1) from Saccharomyces cerevisiae (strain ATCC 204508 / S288c) (Baker's yeast).